Here is a 303-residue protein sequence, read N- to C-terminus: Aliphatic sulfonates import ATP-binding protein SsuB (303 aa).

One can recognise an ABC transporter domain in the interval Leu-39–Leu-263. Gly-71–Ser-78 contacts ATP.

Belongs to the ABC transporter superfamily. Aliphatic sulfonates importer (TC 3.A.1.17.2) family. In terms of assembly, the complex is composed of two ATP-binding proteins (SsuB), two transmembrane proteins (SsuC) and a solute-binding protein (SsuA).

The protein resides in the cell inner membrane. The catalysed reaction is ATP + H2O + aliphatic sulfonate-[sulfonate-binding protein]Side 1 = ADP + phosphate + aliphatic sulfonateSide 2 + [sulfonate-binding protein]Side 1.. Its function is as follows. Part of the ABC transporter complex SsuABC involved in aliphatic sulfonates import. Responsible for energy coupling to the transport system. The sequence is that of Aliphatic sulfonates import ATP-binding protein SsuB from Cupriavidus necator (strain ATCC 17699 / DSM 428 / KCTC 22496 / NCIMB 10442 / H16 / Stanier 337) (Ralstonia eutropha).